We begin with the raw amino-acid sequence, 182 residues long: MFKYIGDIVKGTGTQLRSLVMVFGHGFRKRDTLQYPEEPVYLPPRYRGRIVLTRDPDGEERCVACNLCAVACPVGCISLQKAETEDGRWYPDFFRINFSRCIFCGLCEEACPTTAIQLTPDFEMAEFKRQDLVYEKEDLLISGPGKNPDYNFYRVAGMAIAGKPKGSAQNEAEPINVKSLLP.

2 4Fe-4S ferredoxin-type domains span residues 52–82 and 92–121; these read LTRD…LQKA and DFFR…LTPD. Residues C62, C65, C68, C72, C101, C104, C107, and C111 each contribute to the [4Fe-4S] cluster site.

It belongs to the complex I 23 kDa subunit family. In terms of assembly, NDH-1 is composed of 13 different subunits. Subunits NuoA, H, J, K, L, M, N constitute the membrane sector of the complex. It depends on [4Fe-4S] cluster as a cofactor.

It is found in the cell inner membrane. The enzyme catalyses a quinone + NADH + 5 H(+)(in) = a quinol + NAD(+) + 4 H(+)(out). NDH-1 shuttles electrons from NADH, via FMN and iron-sulfur (Fe-S) centers, to quinones in the respiratory chain. The immediate electron acceptor for the enzyme in this species is believed to be ubiquinone. Couples the redox reaction to proton translocation (for every two electrons transferred, four hydrogen ions are translocated across the cytoplasmic membrane), and thus conserves the redox energy in a proton gradient. This chain is NADH-quinone oxidoreductase subunit I, found in Pseudomonas fluorescens (strain ATCC BAA-477 / NRRL B-23932 / Pf-5).